Reading from the N-terminus, the 215-residue chain is Putative zinc finger protein ORF121 (215 aa).

An RING-type; degenerate zinc finger spans residues 53 to 105 (CVICMEPTYTKKTLAECDIEGGALRVTTMPCPTHYICDNCIRQEMEDKCPICR).

This Magallana gigas (Pacific oyster) protein is Putative zinc finger protein ORF121.